An 866-amino-acid polypeptide reads, in one-letter code: Fibrinogen alpha chain (866 aa).

Residues 1–19 (MFSMRIVCLVLSVVGTAWT) form the signal peptide. Phosphoserine is present on Ser-22. An alpha-chain polymerization, binding distal domain of another fibrin gamma chain region spans residues 36 to 38 (GPR). The residue at position 45 (Ser-45) is a Phosphoserine; by FAM20C. Ser-50 carries the post-translational modification Phosphoserine. Phosphoserine; by FAM20C is present on Ser-56. Residues 68–631 (CRMKGLIDEV…GHAKSRPVRD (564 aa)) are a coiled coil. The disordered stretch occupies residues 262–460 (ERPGGNEITR…SGSTTTTRRS (199 aa)). Residues 270–299 (TRGGSTSYGTGSETESPRNPSSAGSWNSGS) show a composition bias toward low complexity. Phosphoserine is present on residues Ser-281, Ser-291, and Ser-294. A glycan (O-linked (GalNAc...) threonine) is linked at Thr-320. Lys-322 is covalently cross-linked (Isoglutamyl lysine isopeptide (Lys-Gln) (interchain with Q-41 in alpha-2-antiplasmin)). Gln-347 is covalently cross-linked (Isoglutamyl lysine isopeptide (Gln-Lys) (interchain with K-?)). A glycan (O-linked (GalNAc...) serine) is linked at Ser-351. Over residues 354–391 (PGSTGTWNPGSSERGSAGHWTSESSVSGSTGQWHSESG) the composition is skewed to polar residues. Residue Ser-364 is modified to Phosphoserine; by FAM20C. Gln-385 participates in a covalent cross-link: Isoglutamyl lysine isopeptide (Gln-Lys) (interchain with K-?). Residue Thr-412 is modified to Phosphothreonine. Residues 424 to 449 (TRREYHTEKLVTSKGDKELRTGKEKV) are compositionally biased toward basic and acidic residues. Positions 450–460 (TSGSTTTTRRS) are enriched in low complexity. Position 451 is a phosphoserine (Ser-451). N-linked (GlcNAc...) asparagine; in variant Caracas-2 glycosylation occurs at Ser-453. Cys-461 and Cys-491 are disulfide-bonded. Residue Ser-501 is modified to Phosphoserine. Thr-505 is modified (phosphothreonine). Ser-524 bears the Phosphoserine; by FAM20C mark. Residues Lys-527 and Lys-558 each participate in an isoglutamyl lysine isopeptide (Lys-Gln) (interchain with Q-?) cross-link. Positions 543-638 (ETESRGSESG…VRDCDDVLQT (96 aa)) are disordered. Ser-560 is subject to Phosphoserine; by FAM20C. A 4-hydroxyproline; by P4HA1 modification is found at Pro-565. Isoglutamyl lysine isopeptide (Lys-Gln) (interchain with Q-?) cross-links involve residues Lys-575, Lys-581, and Lys-599. The span at 575-589 (KSSSYSKQFTSSTSY) shows a compositional bias: low complexity. The span at 594 to 617 (STFESKSYKMADEAGSEADHEGTH) shows a compositional bias: basic and acidic residues. Ser-609 bears the Phosphoserine; by FAM20C mark. A compositionally biased stretch (basic residues) spans 618 to 627 (STKRGHAKSR). The region spanning 623–864 (HAKSRPVRDC…AVRMKIRPLV (242 aa)) is the Fibrinogen C-terminal domain. N-linked (GlcNAc...) asparagine glycosylation occurs at Asn-686. Ca(2+) contacts are provided by Asp-791, Asp-793, Trp-795, and Glu-797. A disulfide bridge connects residues Cys-799 and Cys-812.

As to quaternary structure, heterohexamer; disulfide linked. Contains 2 sets of 3 non-identical chains (alpha, beta and gamma). The 2 heterotrimers are in head to head conformation with the N-termini in a small central domain. (Microbial infection) Interacts with Staphylococcus aureus protein Fib; this interaction inhibits fibrinogen-dependent platelet aggregation and protects the bacteria form phagocytosis. The alpha chain is normally not N-glycosylated, even though glycosylation at Asn-686 was observed when a fragment of the protein was expressed in insect cells. It is well known that heterologous expression of isolated domains can lead to adventitious protein modifications. Besides, glycosylation at Asn-686 is supported by large-scale glycoproteomics studies, but the evidence is still quite tenuous. Most likely, Asn-686 is not glycosylated in the healthy human body, or only with low efficiency. Post-translationally, O-glycosylated. In terms of processing, forms F13A-mediated cross-links between a glutamine and the epsilon-amino group of a lysine residue, forming fibronectin-fibrinogen heteropolymers. About one-third of the alpha chains in the molecules in blood were found to be phosphorylated. Post-translationally, conversion of fibrinogen to fibrin is triggered by thrombin, which cleaves fibrinopeptides A and B from alpha and beta chains, and thus exposes the N-terminal polymerization sites responsible for the formation of the soft clot. The soft clot is converted into the hard clot by factor XIIIA which catalyzes the epsilon-(gamma-glutamyl)lysine cross-linking between gamma chains (stronger) and between alpha chains (weaker) of different monomers. In terms of processing, phosphorylated by FAM20C in the extracellular medium. In terms of tissue distribution, detected in blood plasma (at protein level).

It is found in the secreted. Cleaved by the protease thrombin to yield monomers which, together with fibrinogen beta (FGB) and fibrinogen gamma (FGG), polymerize to form an insoluble fibrin matrix. Fibrin has a major function in hemostasis as one of the primary components of blood clots. In addition, functions during the early stages of wound repair to stabilize the lesion and guide cell migration during re-epithelialization. Was originally thought to be essential for platelet aggregation, based on in vitro studies using anticoagulated blood. However, subsequent studies have shown that it is not absolutely required for thrombus formation in vivo. Enhances expression of SELP in activated platelets via an ITGB3-dependent pathway. Maternal fibrinogen is essential for successful pregnancy. Fibrin deposition is also associated with infection, where it protects against IFNG-mediated hemorrhage. May also facilitate the immune response via both innate and T-cell mediated pathways. The polypeptide is Fibrinogen alpha chain (FGA) (Homo sapiens (Human)).